We begin with the raw amino-acid sequence, 100 residues long: Large ribosomal subunit protein uL23 (100 aa).

It belongs to the universal ribosomal protein uL23 family. Part of the 50S ribosomal subunit. Contacts protein L29, and trigger factor when it is bound to the ribosome.

In terms of biological role, one of the early assembly proteins it binds 23S rRNA. One of the proteins that surrounds the polypeptide exit tunnel on the outside of the ribosome. Forms the main docking site for trigger factor binding to the ribosome. The protein is Large ribosomal subunit protein uL23 of Synechococcus elongatus (strain ATCC 33912 / PCC 7942 / FACHB-805) (Anacystis nidulans R2).